Consider the following 182-residue polypeptide: Large ribosomal subunit protein uL5 (182 aa).

The protein belongs to the universal ribosomal protein uL5 family. In terms of assembly, part of the 50S ribosomal subunit; part of the 5S rRNA/L5/L18/L25 subcomplex. Contacts the 5S rRNA and the P site tRNA. Forms a bridge to the 30S subunit in the 70S ribosome.

Functionally, this is one of the proteins that bind and probably mediate the attachment of the 5S RNA into the large ribosomal subunit, where it forms part of the central protuberance. In the 70S ribosome it contacts protein S13 of the 30S subunit (bridge B1b), connecting the 2 subunits; this bridge is implicated in subunit movement. Contacts the P site tRNA; the 5S rRNA and some of its associated proteins might help stabilize positioning of ribosome-bound tRNAs. This is Large ribosomal subunit protein uL5 from Leptospira interrogans serogroup Icterohaemorrhagiae serovar copenhageni (strain Fiocruz L1-130).